We begin with the raw amino-acid sequence, 497 residues long: Probable cytosol aminopeptidase (497 aa).

2 residues coordinate Mn(2+): K268 and D273. K280 is an active-site residue. Mn(2+) is bound by residues D291, D350, and E352. The active site involves R354.

This sequence belongs to the peptidase M17 family. It depends on Mn(2+) as a cofactor.

Its subcellular location is the cytoplasm. The catalysed reaction is Release of an N-terminal amino acid, Xaa-|-Yaa-, in which Xaa is preferably Leu, but may be other amino acids including Pro although not Arg or Lys, and Yaa may be Pro. Amino acid amides and methyl esters are also readily hydrolyzed, but rates on arylamides are exceedingly low.. The enzyme catalyses Release of an N-terminal amino acid, preferentially leucine, but not glutamic or aspartic acids.. In terms of biological role, presumably involved in the processing and regular turnover of intracellular proteins. Catalyzes the removal of unsubstituted N-terminal amino acids from various peptides. The chain is Probable cytosol aminopeptidase from Alkalilimnicola ehrlichii (strain ATCC BAA-1101 / DSM 17681 / MLHE-1).